The sequence spans 322 residues: Lipoyl synthase (322 aa).

The span at 1–25 (MSQRITIDHRSAPALRHPEKAHRPD) shows a compositional bias: basic and acidic residues. Residues 1-29 (MSQRITIDHRSAPALRHPEKAHRPDNPIQ) are disordered. [4Fe-4S] cluster-binding residues include cysteine 61, cysteine 66, cysteine 72, cysteine 87, cysteine 91, cysteine 94, and serine 300. The Radical SAM core domain occupies 73–289 (WSQRHATMMI…AAAARSKGFL (217 aa)).

Belongs to the radical SAM superfamily. Lipoyl synthase family. Requires [4Fe-4S] cluster as cofactor.

It is found in the cytoplasm. It catalyses the reaction [[Fe-S] cluster scaffold protein carrying a second [4Fe-4S](2+) cluster] + N(6)-octanoyl-L-lysyl-[protein] + 2 oxidized [2Fe-2S]-[ferredoxin] + 2 S-adenosyl-L-methionine + 4 H(+) = [[Fe-S] cluster scaffold protein] + N(6)-[(R)-dihydrolipoyl]-L-lysyl-[protein] + 4 Fe(3+) + 2 hydrogen sulfide + 2 5'-deoxyadenosine + 2 L-methionine + 2 reduced [2Fe-2S]-[ferredoxin]. Its pathway is protein modification; protein lipoylation via endogenous pathway; protein N(6)-(lipoyl)lysine from octanoyl-[acyl-carrier-protein]: step 2/2. Functionally, catalyzes the radical-mediated insertion of two sulfur atoms into the C-6 and C-8 positions of the octanoyl moiety bound to the lipoyl domains of lipoate-dependent enzymes, thereby converting the octanoylated domains into lipoylated derivatives. The protein is Lipoyl synthase of Gluconobacter oxydans (strain 621H) (Gluconobacter suboxydans).